A 201-amino-acid chain; its full sequence is 3-isopropylmalate dehydratase small subunit (201 aa).

This sequence belongs to the LeuD family. LeuD type 1 subfamily. As to quaternary structure, heterodimer of LeuC and LeuD.

It carries out the reaction (2R,3S)-3-isopropylmalate = (2S)-2-isopropylmalate. Its pathway is amino-acid biosynthesis; L-leucine biosynthesis; L-leucine from 3-methyl-2-oxobutanoate: step 2/4. Functionally, catalyzes the isomerization between 2-isopropylmalate and 3-isopropylmalate, via the formation of 2-isopropylmaleate. In Shewanella sp. (strain MR-7), this protein is 3-isopropylmalate dehydratase small subunit.